We begin with the raw amino-acid sequence, 853 residues long: MSAIENFDAHTPMMQQYLKLKAQHPEILLFYRMGDFYELFYDDAKRASQLLDISLTKRGASAGEPIPMAGIPYHAVENYLAKLVNQGESVAICEQIGDPATSKGPVERKVVRIVTPGTISDEALLQERQDNLLAAIWQDSKGFGYATLDISSGRFRLSEPADRETMAAELQRTNPAELLYAEDFAEMSLIEGRRGLRRRPLWEFEIDTARQQLNLQFGTRDLVGFGVENAPRGLCAAGCLLQYAKDTQRTTLPHIRSITMEREQDSIIMDAATRRNLEITQNLAGGAENTLASVLDCTVTPMGSRMLKRWLHMPVRDTRVLLERQQTIGALQDFTAELQPVLRQVGDLERILARLALRTARPRDLARMRHAFQQLPELRAQLENVDSAPVQALREKMGEFAELRDLLERAIIDTPPVLVRDGGVIASGYNEELDEWRALADGATDYLERLEVRERERTGLDTLKVGFNAVHGYYIQISRGQSHLAPINYMRRQTLKNAERYIIPELKEYEDKVLTSKGKALALEKQLYEELFDLLLPHLEALQQSASALAELDVLVNLAERAYTLNYTCPTFIDKPGIRITEGRHPVVEQVLNEPFIANPLNLSPQRRMLIITGPNMGGKSTYMRQTALIALMAYIGSYVPAQKVEIGPIDRIFTRVGAADDLASGRSTFMVEMTETANILHNATEYSLVLMDEIGRGTSTYDGLSLAWACAENLANKIKALTLFATHYFELTQLPEKMEGVANVHLDALEHGDTIAFMHSVQDGAASKSYGLAVAALAGVPKEVIKRARQKLRELESISPNAAATQVDGTQMSLLSVPEETSPAVEALENLDPDSLTPRQALEWIYRLKSLV.

Residue 614–621 (GPNMGGKS) coordinates ATP.

It belongs to the DNA mismatch repair MutS family.

In terms of biological role, this protein is involved in the repair of mismatches in DNA. It is possible that it carries out the mismatch recognition step. This protein has a weak ATPase activity. The sequence is that of DNA mismatch repair protein MutS from Escherichia fergusonii (strain ATCC 35469 / DSM 13698 / CCUG 18766 / IAM 14443 / JCM 21226 / LMG 7866 / NBRC 102419 / NCTC 12128 / CDC 0568-73).